Consider the following 385-residue polypeptide: Sensor histidine kinase Hik2 (385 aa).

The GAF domain occupies 11–131 (ALCRTQLELV…QQVAQTLAIA (121 aa)). Residue Cys13 coordinates [3Fe-4S] cluster. The tract at residues 142 to 270 (SHSPAQPLDQ…PQLPPIWLEE (129 aa)) is DHp domain, may sense NaCl. One can recognise a Histidine kinase domain in the interval 158 to 381 (DLLHQLRNPV…AFTLAIPWQM (224 aa)). His161 carries the phosphohistidine; by autocatalysis modification.

This sequence belongs to the chloroplast sensor kinase protein family. As to quaternary structure, hexamers; upon treatment with 0.5 M NaCl only tetramers are seen. The tetramers are probably inactive. The cofactor is [3Fe-4S] cluster. Autophosphorylates, possibly on His-161.

It catalyses the reaction ATP + protein L-histidine = ADP + protein N-phospho-L-histidine.. Its function is as follows. Member of 2 two-component regulatory system(s) Hik2/Rre1 and Hik2/RppA. Transduces PQ (plastoquinone) redox signals to photosystem gene expression machinery during the adjustment of photosystem stoichiometry. Reduced PQ suppresses its autophosphorylation activity (i.e. kinase activity is higher under oxidizing conditions). As part of a two-component regulatory system with Rre1, controls expression of sigB and several other genes in response to hyperosmotic stress. May transfer phosphate to RppA in a possible Hik2/RppA two-component system. The polypeptide is Sensor histidine kinase Hik2 (Thermosynechococcus vestitus (strain NIES-2133 / IAM M-273 / BP-1)).